The sequence spans 167 residues: ATP synthase subunit b (167 aa).

The helical transmembrane segment at S7–A25 threads the bilayer.

It belongs to the ATPase B chain family. F-type ATPases have 2 components, F(1) - the catalytic core - and F(0) - the membrane proton channel. F(1) has five subunits: alpha(3), beta(3), gamma(1), delta(1), epsilon(1). F(0) has three main subunits: a(1), b(2) and c(10-14). The alpha and beta chains form an alternating ring which encloses part of the gamma chain. F(1) is attached to F(0) by a central stalk formed by the gamma and epsilon chains, while a peripheral stalk is formed by the delta and b chains.

The protein resides in the cell inner membrane. In terms of biological role, f(1)F(0) ATP synthase produces ATP from ADP in the presence of a proton or sodium gradient. F-type ATPases consist of two structural domains, F(1) containing the extramembraneous catalytic core and F(0) containing the membrane proton channel, linked together by a central stalk and a peripheral stalk. During catalysis, ATP synthesis in the catalytic domain of F(1) is coupled via a rotary mechanism of the central stalk subunits to proton translocation. Its function is as follows. Component of the F(0) channel, it forms part of the peripheral stalk, linking F(1) to F(0). The sequence is that of ATP synthase subunit b from Rickettsia prowazekii (strain Madrid E).